A 321-amino-acid polypeptide reads, in one-letter code: Lambda-crystallin homolog (321 aa).

Residue Ser6 is modified to Phosphoserine. NAD(+)-binding positions include 19-20 (LI), Asp39, Glu100, and Lys105.

This sequence belongs to the 3-hydroxyacyl-CoA dehydrogenase family. Homodimer.

The protein localises to the cytoplasm. The catalysed reaction is L-gulonate + NAD(+) = 3-dehydro-L-gulonate + NADH + H(+). With respect to regulation, inhibited by malonate. Has high L-gulonate 3-dehydrogenase activity. It also exhibits low dehydrogenase activity toward L-3-hydroxybutyrate (HBA) and L-threonate. This Bos taurus (Bovine) protein is Lambda-crystallin homolog (CRYL1).